The chain runs to 315 residues: Bifunctional protein FolD (315 aa).

Residues 166–168 (GRS), Ser193, and Ile234 contribute to the NADP(+) site.

This sequence belongs to the tetrahydrofolate dehydrogenase/cyclohydrolase family. In terms of assembly, homodimer.

The enzyme catalyses (6R)-5,10-methylene-5,6,7,8-tetrahydrofolate + NADP(+) = (6R)-5,10-methenyltetrahydrofolate + NADPH. It carries out the reaction (6R)-5,10-methenyltetrahydrofolate + H2O = (6R)-10-formyltetrahydrofolate + H(+). Its pathway is one-carbon metabolism; tetrahydrofolate interconversion. Its function is as follows. Catalyzes the oxidation of 5,10-methylenetetrahydrofolate to 5,10-methenyltetrahydrofolate and then the hydrolysis of 5,10-methenyltetrahydrofolate to 10-formyltetrahydrofolate. In Treponema pallidum (strain Nichols), this protein is Bifunctional protein FolD.